The primary structure comprises 937 residues: Isoleucine--tRNA ligase (937 aa).

The 'HIGH' region signature appears at 58 to 68 (PYANGSIHIGH). Glu-561 contacts L-isoleucyl-5'-AMP. The short motif at 602-606 (KMSKS) is the 'KMSKS' region element. Position 605 (Lys-605) interacts with ATP. Residues Cys-900, Cys-903, Cys-920, and Cys-923 each coordinate Zn(2+).

This sequence belongs to the class-I aminoacyl-tRNA synthetase family. IleS type 1 subfamily. In terms of assembly, monomer. The cofactor is Zn(2+).

It is found in the cytoplasm. The enzyme catalyses tRNA(Ile) + L-isoleucine + ATP = L-isoleucyl-tRNA(Ile) + AMP + diphosphate. Catalyzes the attachment of isoleucine to tRNA(Ile). As IleRS can inadvertently accommodate and process structurally similar amino acids such as valine, to avoid such errors it has two additional distinct tRNA(Ile)-dependent editing activities. One activity is designated as 'pretransfer' editing and involves the hydrolysis of activated Val-AMP. The other activity is designated 'posttransfer' editing and involves deacylation of mischarged Val-tRNA(Ile). This chain is Isoleucine--tRNA ligase, found in Pectobacterium atrosepticum (strain SCRI 1043 / ATCC BAA-672) (Erwinia carotovora subsp. atroseptica).